Reading from the N-terminus, the 312-residue chain is Protein phosphatase 2A catalytic subunit B (312 aa).

4 residues coordinate Mn(2+): Asp55, His57, Asp83, and Asn115. The Proton donor role is filled by His116. Positions 165 and 240 each coordinate Mn(2+).

Belongs to the PPP phosphatase family. PP-2A subfamily. In terms of assembly, component of the Sca1 complex composed of at least gefA, gefH, scaA, phr, and the protein phosphatase 2A subunits pppA and pho2B. The cofactor is Mn(2+).

Its subcellular location is the cell membrane. The catalysed reaction is O-phospho-L-seryl-[protein] + H2O = L-seryl-[protein] + phosphate. The enzyme catalyses O-phospho-L-threonyl-[protein] + H2O = L-threonyl-[protein] + phosphate. Its function is as follows. Component of the Sca1 complex, a regulator of cell motility, chemotaxis and signal relay. The Sca1 complex is recruited to the plasma membrane in a chemoattractant- and F-actin-dependent manner and is enriched at the leading edge of chemotaxing cells where it regulates F-actin dynamics and signal relay by controlling the activation of rasC and the downstream target of rapamycin complex 2 (TORC2)-Akt/protein kinase B (PKB) pathway. This chain is Protein phosphatase 2A catalytic subunit B, found in Dictyostelium discoideum (Social amoeba).